Here is a 535-residue protein sequence, read N- to C-terminus: MRYEEINLGYEKNLVRYYLTGYDRVAKFYHYNPWNTRSFYDRADYLKDKSNPEALYNLLSFYLKDFALDQKVVENLDKIKKGAFIVLTGQQPGFLTGPLYTIYKAVHAIIEAKRLSELLNHEVVPLFWIGSEDHDVEEVNFLYFPGKEGPQEIKIEFTDLRKIPAGLRPAEPETVEAIEKFEGLLPNFDYKEEVFTEIKKAYHSANLGQAFARLMLKLFGKFGLLVYDGLNPEFKRVTKGYLKNAFLKRDAIEKALFKVYTEQQSLGIEPQLDPCPNHCNMFIFKNDERIALEVAGEKVVSRDGEVSFTREEFLEFMERYPEKLSPNLVVRTSIQSLVFPVLAYVAGPGEIGYYGMLKEVYEIMGTQMPVILPRFTATLIEPRVEKALKEFALLPQEIYQDYDGVFHRVLERLDNLGIDDTFKALKESINSAYKNLQEKLAPLGADFQKLTGENLGRVMAQVKYLEERAQKYHREKNSKYIEKLWYLKTNFLPENEWQERVYNVFYYLAKYGFALIEKLLGIPFNPGKHYLLYLE.

A coiled-coil region spans residues 420–477; it reads DTFKALKESINSAYKNLQEKLAPLGADFQKLTGENLGRVMAQVKYLEERAQKYHREKN.

Belongs to the BshC family.

Functionally, involved in bacillithiol (BSH) biosynthesis. May catalyze the last step of the pathway, the addition of cysteine to glucosamine malate (GlcN-Mal) to generate BSH. The polypeptide is Putative cysteine ligase BshC (Carboxydothermus hydrogenoformans (strain ATCC BAA-161 / DSM 6008 / Z-2901)).